We begin with the raw amino-acid sequence, 315 residues long: Olfactory receptor 4E1 (315 aa).

At 1 to 33 (MEEAILLNQTSLVTYFRLRGLSVNHKARIAMFS) the chain is on the extracellular side. A glycan (N-linked (GlcNAc...) asparagine) is linked at Asn8. Residues 34 to 54 (MFLIFYVLTLIGNVLIVITII) traverse the membrane as a helical segment. At 55-61 (YDHRLHT) the chain is on the cytoplasmic side. The helical transmembrane segment at 62 to 82 (PMYFFLSNLSFIDVCHSTVTV) threads the bilayer. Topologically, residues 83–101 (PKMLRDVWSEEKLISFDAC) are extracellular. A disulfide bond links Cys101 and Cys183. A helical membrane pass occupies residues 102–122 (VTQMFFLHLFACTEIFLLTVM). At 123–143 (AYDRYVAICKPLQYMIVMNWK) the chain is on the cytoplasmic side. The helical transmembrane segment at 144 to 164 (VCVLLAVALWTGGTIHSIALT) threads the bilayer. Over 165–208 (SLTIKLPYCGPDEIDNFFCDVPQVIKLACIDTHVIEILIVSNSG) the chain is Extracellular. The helical transmembrane segment at 209–229 (LISVVCFVVLVVSYAVILVSL) threads the bilayer. The Cytoplasmic segment spans residues 230–240 (RQQISKGKRKA). The helical transmembrane segment at 241–261 (LSTCAAHLTVVTLFLGHCIFI) threads the bilayer. Residues 262 to 272 (YSRPSTSLPED) are Extracellular-facing. The helical transmembrane segment at 273–293 (KVVSVFFTAVTPLLNPIIYTL) threads the bilayer. Residues 294-315 (RNEEMKSALNKLVGRKERKEEK) lie on the Cytoplasmic side of the membrane.

This sequence belongs to the G-protein coupled receptor 1 family.

Its subcellular location is the cell membrane. In terms of biological role, odorant receptor. The sequence is that of Olfactory receptor 4E1 (OR4E1) from Homo sapiens (Human).